A 241-amino-acid chain; its full sequence is Lipopolysaccharide export system ATP-binding protein LptB (241 aa).

In terms of domain architecture, ABC transporter spans 4 to 237 (LTAKNLAKAY…EHVKRVYLGE (234 aa)). 36–43 (GPNGAGKT) provides a ligand contact to ATP.

This sequence belongs to the ABC transporter superfamily. Outer membrane lipopolysaccharide export (TC 1.B.42) family. Component of the lipopolysaccharide transport and assembly complex. The LptBFG transporter is composed of two ATP-binding proteins (LptB) and two transmembrane proteins (LptF and LptG).

It is found in the cytoplasm. The protein resides in the cell inner membrane. In terms of biological role, part of the ABC transporter complex LptBFG involved in the translocation of lipopolysaccharide (LPS) from the inner membrane to the outer membrane. Probably responsible for energy coupling to the transport system. The polypeptide is Lipopolysaccharide export system ATP-binding protein LptB (lptB) (Escherichia coli O157:H7).